The chain runs to 794 residues: Ribonucleoside-diphosphate reductase large subunit (794 aa).

Positions 1 to 92 (MHVIKRDGGQ…VSNLHKETKK (92 aa)) constitute an ATP-cone domain. ATP-binding positions include 5 to 6 (KR), 11 to 17 (EGVMFDK), Thr53, and Asp57. GDP contacts are provided by Ser202 and Ser217. A disulfide bridge connects residues Cys218 and Cys444. DTTP is bound by residues 226–228 (DSI), Lys243, Arg256, and 263–264 (AG). Residue Asn427 coordinates GDP. Catalysis depends on Asn427, which acts as the Proton acceptor. Cys429 serves as the catalytic Cysteine radical intermediate. Residues Glu431 and 604–607 (TAST) each bind GDP. Glu431 serves as the catalytic Proton acceptor.

Belongs to the ribonucleoside diphosphate reductase large chain family. Heterodimer of a large and a small subunit.

Its subcellular location is the cytoplasm. The catalysed reaction is a 2'-deoxyribonucleoside 5'-diphosphate + [thioredoxin]-disulfide + H2O = a ribonucleoside 5'-diphosphate + [thioredoxin]-dithiol. With respect to regulation, under complex allosteric control mediated by deoxynucleoside triphosphates and ATP binding to separate specificity and activation sites on the M1 subunit. The type of nucleotide bound at the specificity site determines substrate preference. It seems probable that ATP makes the enzyme reduce CDP and UDP, dGTP favors ADP reduction and dTTP favors GDP reduction. Stimulated by ATP and inhibited by dATP binding to the activity site. Its function is as follows. Provides the precursors necessary for DNA synthesis. Catalyzes the biosynthesis of deoxyribonucleotides from the corresponding ribonucleotides. The sequence is that of Ribonucleoside-diphosphate reductase large subunit (rrm1) from Danio rerio (Zebrafish).